The following is a 720-amino-acid chain: MPNLKIAYSPKVEQYFSTNRELVEIAKTDFTDVAAIVLSSSDVGEYLDRIKATKFDVPVFIVQTDEQQVDPKFYDSIYHIQDLNGYDIKLYSRQIETAAKLYEEKMLPPFFKMLSEYVEMGNIAFDCPGHQGGQYYRKHPAGRFLYDFYGENIFRSDICNADVKLGDLLIHEGAACDAQKYAAQVFNADKTYFVLNGTSSSNKVALNAVLAPGDLVLFDRNNHKSNHHGALIQAGATPIYLETARNPFGFIGGIDSHCFEEDYLKSLIKEVAPEKLNQKRPFRLAVIQLGTYDGTIYNARQVVDKIGHLCDYILFDSAWVGYEQFIPMMKDCSPLLLELNENDPGILVTQSVHKQQAGFSQTSQIHKKDKHIKGQDRYVNHKRFNNAFMLHASTSPFYPLFATLDVNAKIQGSEAGRRLWHECVKVGIEARKLVLNHCELIRPFIPTTIKGKKWQDYDTEEIATNLEFFKFHPTDTWHKFEGYADEQYFVDPCKFLLTTPGISLETGEYEEFGVPATILANYLRENGIIPEKCDLNSILFLLTPAETITKMQTLVAQIALFEKHIKQDSLLKYVLPTVYKNNEDRYKGYTIRQLCQEMHDLYVSRNVKQLQKDLFRKATLPEYVLNPHDANIELIRNKVELVPLTDIVGRVAAEGALPYPPGVLCVVPGEKWSTTAHQYFLALEEGINTLPGFAPEIQGVYLQKDPDGRTRAYGYVLTDY.

K354 carries the post-translational modification N6-(pyridoxal phosphate)lysine.

The protein belongs to the Orn/Lys/Arg decarboxylase class-I family. The cofactor is pyridoxal 5'-phosphate.

The enzyme catalyses L-ornithine + H(+) = putrescine + CO2. This is Ornithine decarboxylase (speF) from Haemophilus influenzae (strain ATCC 51907 / DSM 11121 / KW20 / Rd).